The primary structure comprises 477 residues: C3a anaphylatoxin chemotactic receptor (477 aa).

The Extracellular portion of the chain corresponds to 1-23; the sequence is MESFDADTNSTDLHSRPLFQPQD. An N-linked (GlcNAc...) asparagine glycan is attached at Asn9. A helical transmembrane segment spans residues 24-46; it reads IASMVILGLTCLLGLLGNGLVLW. At 47-57 the chain is on the cytoplasmic side; sequence VAGVKMKTTVN. A helical transmembrane segment spans residues 58–80; the sequence is TVWFLHLTLADFLCCLSLPFSLA. The Extracellular portion of the chain corresponds to 81 to 96; that stretch reads HLILQGHWPYGLFLCK. Cys95 and Cys172 are disulfide-bonded. The chain crosses the membrane as a helical span at residues 97 to 118; it reads LIPSIIILNMFASVFLLTAISL. Topologically, residues 119–139 are cytoplasmic; it reads DRCLIVHKPIWCQNHRNVRTA. Residues 140–160 traverse the membrane as a helical segment; the sequence is FAICGCVWVVAFVMCVPVFVY. At 161 to 333 the chain is on the extracellular side; that stretch reads RDLFIMDNRS…TPLMAITITR (173 aa). Residue Asn168 is glycosylated (N-linked (GlcNAc...) asparagine). 2 positions are modified to sulfotyrosine: Tyr174 and Tyr184. Asn197 and Asn201 each carry an N-linked (GlcNAc...) asparagine glycan. Residue Tyr312 is modified to Sulfotyrosine. A helical membrane pass occupies residues 334 to 353; that stretch reads LVVGFLVPFFIMVICYSLIV. Residues 354 to 370 are Cytoplasmic-facing; the sequence is FRMRKTNFTKSRNKTFR. A helical transmembrane segment spans residues 371–393; it reads VAVAVVTVFFICWTPYHLVGVLL. Topologically, residues 394 to 410 are extracellular; that stretch reads LITDPESSLGEAVMSWD. Residues 411–431 traverse the membrane as a helical segment; the sequence is HMSIALASANSCFNPFLYALL. Residues 432 to 477 lie on the Cytoplasmic side of the membrane; it reads GKDFRKKARQSIKGILEAAFSEELTHSTNCTQDKASSKRNNMSTDV. A Phosphoserine modification is found at Ser452. Thr456 is modified (phosphothreonine).

This sequence belongs to the G-protein coupled receptor 1 family. In terms of assembly, interacts with VGF-derived peptide TLQP-21. As to expression, detected in varying levels in all tissues examined except the spleen. Especially abundant in heart and lung.

It localises to the cell membrane. Functionally, receptor for the chemotactic and inflammatory peptide anaphylatoxin C3a. This receptor stimulates chemotaxis, granule enzyme release and superoxide anion production. The polypeptide is C3a anaphylatoxin chemotactic receptor (C3ar1) (Mus musculus (Mouse)).